A 479-amino-acid chain; its full sequence is Sucrose-6-phosphate hydrolase (479 aa).

Substrate contacts are provided by residues 44-47, Gln63, 106-107, 166-167, and Glu223; these read LLND, YS, and RD. Asp47 is a catalytic residue.

It belongs to the glycosyl hydrolase 32 family.

The protein localises to the cytoplasm. It carries out the reaction Hydrolysis of terminal non-reducing beta-D-fructofuranoside residues in beta-D-fructofuranosides.. It participates in glycan biosynthesis; sucrose metabolism. In Streptococcus mutans serotype c (strain ATCC 700610 / UA159), this protein is Sucrose-6-phosphate hydrolase (scrB).